A 152-amino-acid chain; its full sequence is Ribonuclease H (152 aa).

One can recognise an RNase H type-1 domain in the interval 4–145; it reads SRSMVEIFSD…CDELARQAIA (142 aa). Positions 13, 51, 73, and 137 each coordinate Mg(2+).

It belongs to the RNase H family. As to quaternary structure, monomer. It depends on Mg(2+) as a cofactor.

The protein localises to the cytoplasm. The enzyme catalyses Endonucleolytic cleavage to 5'-phosphomonoester.. In terms of biological role, endonuclease that specifically degrades the RNA of RNA-DNA hybrids. This chain is Ribonuclease H, found in Syntrophotalea carbinolica (strain DSM 2380 / NBRC 103641 / GraBd1) (Pelobacter carbinolicus).